A 238-amino-acid chain; its full sequence is Ditrans,polycis-undecaprenyl-diphosphate synthase ((2E,6E)-farnesyl-diphosphate specific) (238 aa).

D14 is an active-site residue. D14 contributes to the Mg(2+) binding site. Substrate contacts are provided by residues 15-18, W19, R27, H31, and 59-61; these read GNGR and SSE. N62 (proton acceptor) is an active-site residue. Substrate contacts are provided by residues W63, R65, R182, and 188–190; that span reads RIS. A Mg(2+)-binding site is contributed by E201.

Belongs to the UPP synthase family. As to quaternary structure, homodimer. Requires Mg(2+) as cofactor.

It carries out the reaction 8 isopentenyl diphosphate + (2E,6E)-farnesyl diphosphate = di-trans,octa-cis-undecaprenyl diphosphate + 8 diphosphate. In terms of biological role, catalyzes the sequential condensation of isopentenyl diphosphate (IPP) with (2E,6E)-farnesyl diphosphate (E,E-FPP) to yield (2Z,6Z,10Z,14Z,18Z,22Z,26Z,30Z,34E,38E)-undecaprenyl diphosphate (di-trans,octa-cis-UPP). UPP is the precursor of glycosyl carrier lipid in the biosynthesis of bacterial cell wall polysaccharide components such as peptidoglycan and lipopolysaccharide. This chain is Ditrans,polycis-undecaprenyl-diphosphate synthase ((2E,6E)-farnesyl-diphosphate specific), found in Legionella pneumophila (strain Paris).